The primary structure comprises 403 residues: Beta-galactoside alpha-2,6-sialyltransferase 1 (403 aa).

The Cytoplasmic portion of the chain corresponds to 1-9; that stretch reads MIHTNLKRK. A helical; Signal-anchor for type II membrane protein transmembrane segment spans residues 10 to 26; it reads FSCFVLVFLLFAIICVW. Residues 27-403 are Lumenal-facing; that stretch reads KKGSDYEALT…TLSGFRNNRC (377 aa). Disulfide bonds link C139/C403, C181/C332, and C350/C361. Residues N146 and N158 are each glycosylated (N-linked (GlcNAc...) asparagine). Residues S186, N209, N230, 319–321, C350, Y351, T362, Y366, H367, and K373 each bind substrate; that span reads SSG. The residue at position 366 (Y366) is a Phosphotyrosine.

The protein belongs to the glycosyltransferase 29 family. As to quaternary structure, monomer and homodimer. In terms of processing, N-glycosylated.

The protein resides in the golgi apparatus. The protein localises to the golgi stack membrane. It localises to the secreted. The enzyme catalyses a beta-D-galactoside + CMP-N-acetyl-beta-neuraminate = an N-acetyl-alpha-neuraminyl-(2-&gt;6)-beta-D-galactosyl derivative + CMP + H(+). Its pathway is protein modification; protein glycosylation. Transfers sialic acid from CMP-sialic acid to galactose-containing acceptor substrates. The polypeptide is Beta-galactoside alpha-2,6-sialyltransferase 1 (St6gal1) (Mus musculus (Mouse)).